The sequence spans 148 residues: Ubiquitin conjugating enzyme E2 B (148 aa).

The UBC core domain occupies 2 to 148; that stretch reads AAHKRLQKEI…AKEWTKKYAK (147 aa). The active-site Glycyl thioester intermediate is cysteine 87.

This sequence belongs to the ubiquitin-conjugating enzyme family. Interacts with mkkA (via F-box/WD40 repeat domains).

It catalyses the reaction S-ubiquitinyl-[E1 ubiquitin-activating enzyme]-L-cysteine + [E2 ubiquitin-conjugating enzyme]-L-cysteine = [E1 ubiquitin-activating enzyme]-L-cysteine + S-ubiquitinyl-[E2 ubiquitin-conjugating enzyme]-L-cysteine.. It functions in the pathway protein modification; protein ubiquitination. Functionally, involved in protein ubiquitination and degradation during development. Mediates protein ubiquitination at the mound and finger stage required for subsequent development and may be an essential component of the developmental transition between the induction of postaggregative gene expression and subsequent cell-type differentiation and morphogenesis. ubcB and ubpB differentially control ubiquitination/deubiquitination and degradation of mkkA protein in a cell-type-specific and temporally regulated manner. In Dictyostelium discoideum (Social amoeba), this protein is Ubiquitin conjugating enzyme E2 B (ubcB).